Here is a 2131-residue protein sequence, read N- to C-terminus: Beta/gamma crystallin domain-containing protein 1 (2131 aa).

Disordered regions lie at residues 1 to 53 (MPLS…LPAP), 104 to 370 (KSRA…KGHA), 385 to 674 (TEGA…PVHK), 688 to 707 (RTNS…TPAS), and 723 to 743 (AKEM…NGVL). A compositionally biased stretch (basic residues) spans 19 to 35 (PPKKHTTFHLWRSKKKQ). The span at 135–147 (RNGLESPTRSNAK) shows a compositional bias: polar residues. 2 stretches are compositionally biased toward basic and acidic residues: residues 160-169 (LPERESERSR) and 184-194 (GSPRENPREAE). Residues 248–265 (ATTTAKQLHSSPGNSSRQ) show a composition bias toward polar residues. Positions 414–424 (SGRRSGRRRGS) are enriched in basic residues. Over residues 479–490 (ASAASPESKPSP) the composition is skewed to low complexity. 2 positions are modified to phosphoserine: S483 and S489. Composition is skewed to basic and acidic residues over residues 536–546 (PAKESPPKRVP) and 562–572 (EAARAIPRELP). The segment covering 609-619 (RAAGAPGASDA) has biased composition (low complexity). Over residues 723–733 (AKEMEQPEKKV) the composition is skewed to basic and acidic residues. A phosphoserine mark is found at S737 and S756. 2 disordered regions span residues 758-791 (EEIL…DVQT) and 837-889 (DIPT…KDTC). Over residues 769-782 (GDSSENQALGPQPN) the composition is skewed to polar residues. The segment covering 864–881 (SPAESSPGPSLSLSAPAP) has biased composition (low complexity). A Phosphoserine modification is found at S892. Disordered regions lie at residues 926-947 (LELG…AVGS), 1041-1101 (QAQS…VFDS), 1271-1302 (STSQ…EQSN), and 1316-1348 (SSST…SRSN). Phosphothreonine is present on T933. The segment covering 1055-1089 (SSPTNSPSSGNHLATPQRPDQTVTNGQDSPASLLN) has biased composition (polar residues). Low complexity-rich tracts occupy residues 1091–1101 (SAGSDDSVFDS), 1271–1288 (STSQ…QPTT), and 1316–1327 (SSSTSHSSLKSP). Residues 1328–1348 (SHMEKYPQKEKTKEDLDSRSN) show a composition bias toward basic and acidic residues. 12 consecutive Beta/gamma crystallin 'Greek key' domains span residues 1430 to 1469 (GKVV…KVVR), 1470 to 1525 (GCWI…RHVV), 1531 to 1571 (SHID…KVHW), 1572 to 1614 (GTWL…RPLK), 1626 to 1678 (PKVV…KVLR), 1679 to 1721 (GIWV…RPIL), 1727 to 1769 (AHMI…NVLS), 1770 to 1812 (GVWV…QPIC), 1823 to 1860 (NQIH…RVSG), 1861 to 1904 (GSWV…RFID), 1910 to 1950 (PTII…QVIG), and 1951 to 1992 (GIWV…RPFV). The region spanning 1994 to 2127 (KRIYFRLRNK…EKFTQVWEAM (134 aa)) is the Ricin B-type lectin domain.

Belongs to the beta/gamma-crystallin family.

In terms of biological role, may function as suppressor of malignant melanoma. It may exert its effects through interactions with the cytoskeleton. The sequence is that of Beta/gamma crystallin domain-containing protein 1 from Homo sapiens (Human).